A 167-amino-acid polypeptide reads, in one-letter code: Translation initiation factor IF-3 (167 aa).

Belongs to the IF-3 family. In terms of assembly, monomer.

It localises to the cytoplasm. Its function is as follows. IF-3 binds to the 30S ribosomal subunit and shifts the equilibrium between 70S ribosomes and their 50S and 30S subunits in favor of the free subunits, thus enhancing the availability of 30S subunits on which protein synthesis initiation begins. This is Translation initiation factor IF-3 from Bacillus anthracis.